We begin with the raw amino-acid sequence, 191 residues long: Bcl-2-like protein 10 (191 aa).

The BH1 motif lies at 79-98 (LSKDQDFSWSQLVMLLAFAG). Residue Lys112 forms a Glycyl lysine isopeptide (Lys-Gly) (interchain with G-Cter in ubiquitin) linkage. A BH2 motif is present at residues 144-155 (RLEALGGWDGFC). The chain crosses the membrane as a helical span at residues 166–183 (FWRRLLIQAFLSGFFATA).

This sequence belongs to the Bcl-2 family. As to quaternary structure, interacts with BAX. Interacts with BCL2 and BCL2L1/BCLX. Interacts with APAF1. Interacts with ITPR1, ITPR2 and ITPR3; the interaction with ITPR1 is increased in the presence of AHCLY1. Interacts with AHCYL1. Interacts with HIP1R (via ENTH and I/LWEQ domains). Interacts with CASP9. Interacts with BCL2L11/BIM. Interacts with BIK. Interacts with UBQLN4. Interacts with NME2/NM23-H2. Interacts with PMAIP1/NOXA. Interacts with TPX2. Interacts with UBQLN1; in the cytoplasm. Interacts (via BH1 domain) with BECN1. It depends on Ca(2+) as a cofactor. In terms of processing, monoubiquitinated by UBQLN1; results in stabilization of BCL2L10 protein abundance and in relocalization from mitochondria to cytoplasm. As to expression, expressed in multiple embryonic tissues. Restricted to the ovary and testis in adult mice.

The protein localises to the mitochondrion. The protein resides in the nucleus membrane. It localises to the endoplasmic reticulum. Its subcellular location is the cytoplasm. It is found in the cytoskeleton. The protein localises to the spindle. In terms of biological role, promotes cell survival by suppressing apoptosis induced by BAX but not BAK. Increases binding of AHCYL1/IRBIT to ITPR1. Reduces ITPR1-mediated calcium release from the endoplasmic reticulum cooperatively with AHCYL1/IRBIT under normal cellular conditions. Under apoptotic stress conditions, dissociates from ITPR1 and is displaced from mitochondria-associated endoplasmic reticulum membranes, leading to increased Ca(2+) transfer to mitochondria which promotes apoptosis. Required for the correct formation of the microtubule organizing center during oocyte cell division, potentially via regulation of protein abundance and localization of other microtubule organizing center components such as AURKA and TPX2. This is Bcl-2-like protein 10 from Mus musculus (Mouse).